We begin with the raw amino-acid sequence, 414 residues long: Ribulose bisphosphate carboxylase large chain (414 aa).

Substrate-binding residues include Asn100 and Thr150. Lys152 functions as the Proton acceptor in the catalytic mechanism. Residue Lys154 participates in substrate binding. 3 residues coordinate Mg(2+): Lys178, Asp180, and Glu181. Position 178 is an N6-carboxylysine (Lys178). His271 functions as the Proton acceptor in the catalytic mechanism. Substrate is bound by residues Arg272, His304, and Ser356.

Belongs to the RuBisCO large chain family. Type I subfamily. As to quaternary structure, heterohexadecamer of 8 large chains and 8 small chains; disulfide-linked. The disulfide link is formed within the large subunit homodimers. Requires Mg(2+) as cofactor. In terms of processing, the disulfide bond which can form in the large chain dimeric partners within the hexadecamer appears to be associated with oxidative stress and protein turnover.

It localises to the plastid. The protein resides in the chloroplast. The catalysed reaction is 2 (2R)-3-phosphoglycerate + 2 H(+) = D-ribulose 1,5-bisphosphate + CO2 + H2O. The enzyme catalyses D-ribulose 1,5-bisphosphate + O2 = 2-phosphoglycolate + (2R)-3-phosphoglycerate + 2 H(+). Its function is as follows. RuBisCO catalyzes two reactions: the carboxylation of D-ribulose 1,5-bisphosphate, the primary event in carbon dioxide fixation, as well as the oxidative fragmentation of the pentose substrate in the photorespiration process. Both reactions occur simultaneously and in competition at the same active site. In Blechnopsis orientalis (Fish fern), this protein is Ribulose bisphosphate carboxylase large chain (rbcL).